We begin with the raw amino-acid sequence, 1406 residues long: DNA-directed RNA polymerase subunit beta' (1406 aa).

Positions 70, 72, 85, and 88 each coordinate Zn(2+). Positions 460, 462, and 464 each coordinate Mg(2+). Residues Cys814, Cys889, Cys896, and Cys899 each coordinate Zn(2+).

It belongs to the RNA polymerase beta' chain family. As to quaternary structure, the RNAP catalytic core consists of 2 alpha, 1 beta, 1 beta' and 1 omega subunit. When a sigma factor is associated with the core the holoenzyme is formed, which can initiate transcription. Mg(2+) serves as cofactor. Zn(2+) is required as a cofactor.

It carries out the reaction RNA(n) + a ribonucleoside 5'-triphosphate = RNA(n+1) + diphosphate. Functionally, DNA-dependent RNA polymerase catalyzes the transcription of DNA into RNA using the four ribonucleoside triphosphates as substrates. This chain is DNA-directed RNA polymerase subunit beta', found in Stenotrophomonas maltophilia (strain K279a).